We begin with the raw amino-acid sequence, 167 residues long: Large ribosomal subunit protein uL10 (167 aa).

The protein belongs to the universal ribosomal protein uL10 family. Part of the ribosomal stalk of the 50S ribosomal subunit. The N-terminus interacts with L11 and the large rRNA to form the base of the stalk. The C-terminus forms an elongated spine to which L12 dimers bind in a sequential fashion forming a multimeric L10(L12)X complex.

Forms part of the ribosomal stalk, playing a central role in the interaction of the ribosome with GTP-bound translation factors. This chain is Large ribosomal subunit protein uL10, found in Flavobacterium johnsoniae (strain ATCC 17061 / DSM 2064 / JCM 8514 / BCRC 14874 / CCUG 350202 / NBRC 14942 / NCIMB 11054 / UW101) (Cytophaga johnsonae).